The primary structure comprises 242 residues: Myb-related protein MYBAS2 (242 aa).

2 HTH myb-type domains span residues 5–61 (REEI…HPGL) and 62–112 (KRGR…RKKA). The H-T-H motif DNA-binding region spans 33 to 57 (WDFIAKVSGLNRTGKSCRLRWVNYL). A Bipartite nuclear localization signal 1 motif is present at residues 62-65 (KRGR). Residues 85-108 (WSRIARRLPGRTDNEIKNYWRTHM) constitute a DNA-binding region (H-T-H motif). The Bipartite nuclear localization signal 2 motif lies at 109–117 (RKKAQERKS). The tract at residues 110 to 133 (KKAQERKSNMSPSSSSSSLTYQSC) is disordered. Positions 118–133 (NMSPSSSSSSLTYQSC) are enriched in low complexity.

The protein localises to the nucleus. In terms of biological role, transcription factor. The polypeptide is Myb-related protein MYBAS2 (MYBAS2) (Oryza sativa subsp. japonica (Rice)).